The chain runs to 223 residues: Endonuclease NucS (223 aa).

It belongs to the NucS endonuclease family.

The protein localises to the cytoplasm. Its function is as follows. Cleaves both 3' and 5' ssDNA extremities of branched DNA structures. In Streptomyces griseus subsp. griseus (strain JCM 4626 / CBS 651.72 / NBRC 13350 / KCC S-0626 / ISP 5235), this protein is Endonuclease NucS.